The following is a 173-amino-acid chain: Bifunctional protein PyrR (173 aa).

Substrate contacts are provided by residues Thr40–Arg41, Asp97–Thr105, and Arg130. Residues Val93–Thr105 carry the PRPP-binding motif.

Belongs to the purine/pyrimidine phosphoribosyltransferase family. PyrR subfamily. In terms of assembly, homodimer and homohexamer; in equilibrium.

The enzyme catalyses UMP + diphosphate = 5-phospho-alpha-D-ribose 1-diphosphate + uracil. Functionally, regulates transcriptional attenuation of the pyrimidine nucleotide (pyr) operon by binding in a uridine-dependent manner to specific sites on pyr mRNA. This disrupts an antiterminator hairpin in the RNA and favors formation of a downstream transcription terminator, leading to a reduced expression of downstream genes. Its function is as follows. Also displays a weak uracil phosphoribosyltransferase activity which is not physiologically significant. In Streptococcus pyogenes serotype M6 (strain ATCC BAA-946 / MGAS10394), this protein is Bifunctional protein PyrR.